Reading from the N-terminus, the 97-residue chain is Acylphosphatase (97 aa).

Residues 3–97 (KVKMIVSGRV…PDFTDFNIKY (95 aa)) form the Acylphosphatase-like domain. Active-site residues include Arg-18 and Asn-36.

It belongs to the acylphosphatase family.

The enzyme catalyses an acyl phosphate + H2O = a carboxylate + phosphate + H(+). The sequence is that of Acylphosphatase (acyP) from Lactococcus lactis subsp. lactis (strain IL1403) (Streptococcus lactis).